Here is a 177-residue protein sequence, read N- to C-terminus: Large ribosomal subunit protein uL6 (177 aa).

It belongs to the universal ribosomal protein uL6 family. Part of the 50S ribosomal subunit.

In terms of biological role, this protein binds to the 23S rRNA, and is important in its secondary structure. It is located near the subunit interface in the base of the L7/L12 stalk, and near the tRNA binding site of the peptidyltransferase center. The polypeptide is Large ribosomal subunit protein uL6 (Vibrio cholerae serotype O1 (strain ATCC 39541 / Classical Ogawa 395 / O395)).